Consider the following 785-residue polypeptide: Phenylalanine--tRNA ligase beta subunit (785 aa).

A tRNA-binding domain is found at 39 to 148; that stretch reads APAFSGVVIA…ADAPVGQSIR (110 aa). One can recognise a B5 domain in the interval 399–474; that stretch reads PKRQAVQLRA…RVYGYNNIPA (76 aa). Residues Asp-452, Asp-458, Glu-461, and Glu-462 each coordinate Mg(2+). The region spanning 692–784 is the FDX-ACB domain; sequence SKFQPVRRDL…AASELGAQLR (93 aa).

This sequence belongs to the phenylalanyl-tRNA synthetase beta subunit family. Type 1 subfamily. As to quaternary structure, tetramer of two alpha and two beta subunits. It depends on Mg(2+) as a cofactor.

It localises to the cytoplasm. The catalysed reaction is tRNA(Phe) + L-phenylalanine + ATP = L-phenylalanyl-tRNA(Phe) + AMP + diphosphate + H(+). In Chromobacterium violaceum (strain ATCC 12472 / DSM 30191 / JCM 1249 / CCUG 213 / NBRC 12614 / NCIMB 9131 / NCTC 9757 / MK), this protein is Phenylalanine--tRNA ligase beta subunit.